Consider the following 139-residue polypeptide: Trafficking protein particle complex subunit 2-like protein (139 aa).

This sequence belongs to the TRAPP small subunits family. Sedlin subfamily. As to quaternary structure, component of the multisubunit TRAPP (transport protein particle) complex, which includes at least TRAPPC2, TRAPPC2L, TRAPPC3, TRAPPC3L, TRAPPC4, TRAPPC5, TRAPPC8, TRAPPC9, TRAPPC10, TRAPPC11 and TRAPPC12. Interacts with the heterodimer TRAPPC3-TRAPPC6A.

It is found in the cytoplasm. The protein resides in the perinuclear region. The protein localises to the endoplasmic reticulum. It localises to the golgi apparatus. Its function is as follows. May play a role in vesicular transport from endoplasmic reticulum to Golgi. The protein is Trafficking protein particle complex subunit 2-like protein (Trappc2l) of Rattus norvegicus (Rat).